The sequence spans 1451 residues: Protein clueless (1451 aa).

2 disordered regions span residues 1-101 (MALE…EYAA) and 264-286 (KKTRPDSVDCTPPEYVTPGVSEP). Low complexity predominate over residues 9 to 53 (NSNATATGDATATKASSKAKENNNTAGGKKNLNPIPSQQNSNQNL). Basic residues predominate over residues 66–75 (GKKKGKKNRN). Ser-270 carries the post-translational modification Phosphoserine. Positions 424–666 (RAEDAFSSKL…RTFPPDVNFL (243 aa)) constitute a Clu domain. Disordered regions lie at residues 722–775 (AKKQ…ESKT), 961–1012 (AVSS…SSVS), and 1413–1451 (ANNNGEAEDADPKDVKEQAQAGTQLTNGEKAAATEATSS). Basic and acidic residues predominate over residues 748–758 (GADKTDVKEEK). Positions 969–984 (KKRGNGGKHNKHKSSK) are enriched in basic residues. A compositionally biased stretch (low complexity) spans 989-1010 (QQQQQTTGNQNGSSSGTSNGSS).

It belongs to the CLU family.

The protein localises to the cytoplasm. Functionally, mRNA-binding protein involved in proper cytoplasmic distribution of mitochondria. In Drosophila yakuba (Fruit fly), this protein is Protein clueless.